The primary structure comprises 377 residues: Beta sliding clamp (377 aa).

This sequence belongs to the beta sliding clamp family. Forms a ring-shaped head-to-tail homodimer around DNA which binds and tethers DNA polymerases and other proteins to the DNA. The DNA replisome complex has a single clamp-loading complex (3 tau and 1 each of delta, delta', psi and chi subunits) which binds 3 Pol III cores (1 core on the leading strand and 2 on the lagging strand) each with a beta sliding clamp dimer. Additional proteins in the replisome are other copies of gamma, psi and chi, Ssb, DNA helicase and RNA primase.

It is found in the cytoplasm. Confers DNA tethering and processivity to DNA polymerases and other proteins. Acts as a clamp, forming a ring around DNA (a reaction catalyzed by the clamp-loading complex) which diffuses in an ATP-independent manner freely and bidirectionally along dsDNA. Initially characterized for its ability to contact the catalytic subunit of DNA polymerase III (Pol III), a complex, multichain enzyme responsible for most of the replicative synthesis in bacteria; Pol III exhibits 3'-5' exonuclease proofreading activity. The beta chain is required for initiation of replication as well as for processivity of DNA replication. The sequence is that of Beta sliding clamp (dnaN) from Staphylococcus epidermidis (strain ATCC 35984 / DSM 28319 / BCRC 17069 / CCUG 31568 / BM 3577 / RP62A).